The following is a 437-amino-acid chain: Purple acid phosphatase 21 (437 aa).

A signal peptide spans 1–25; sequence MKKMKIFGFLISFSLFFLSPFVCQA. N30 carries N-linked (GlcNAc...) asparagine glycosylation. Residues D152, D179, and Y182 each coordinate Fe cation. D179 serves as a coordination point for Zn(2+). Positions 212 and 296 each coordinate Zn(2+). Residue N212 participates in substrate binding. Catalysis depends on H306, which acts as the Proton donor. H333 contacts Zn(2+). 333-335 is a binding site for substrate; the sequence is HVH. H335 is a Fe cation binding site.

Belongs to the metallophosphoesterase superfamily. Purple acid phosphatase family. Homodimer. The cofactor is Fe cation. It depends on Zn(2+) as a cofactor. Expressed flowers and siliques.

It localises to the secreted. The enzyme catalyses a phosphate monoester + H2O = an alcohol + phosphate. The protein is Purple acid phosphatase 21 (PAP21) of Arabidopsis thaliana (Mouse-ear cress).